The chain runs to 640 residues: Ribonuclease J (640 aa).

Zn(2+)-binding residues include H75, H77, D79, H80, H145, and D167. 368–372 is a substrate binding site; that stretch reads HVSGH. Residue H394 coordinates Zn(2+). Positions 578–640 are disordered; that stretch reads TVSATSATPA…RKRSTTSVSS (63 aa). A compositionally biased stretch (basic and acidic residues) spans 598–610; the sequence is PEPKVKAKPEKKV.

It belongs to the metallo-beta-lactamase superfamily. RNA-metabolizing metallo-beta-lactamase-like family. Bacterial RNase J subfamily. In terms of assembly, homodimer, may be a subunit of the RNA degradosome. Requires Zn(2+) as cofactor.

It localises to the cytoplasm. An RNase that has 5'-3' exonuclease and possibly endoonuclease activity. Involved in maturation of rRNA and in some organisms also mRNA maturation and/or decay. The sequence is that of Ribonuclease J from Synechocystis sp. (strain ATCC 27184 / PCC 6803 / Kazusa).